Here is a 325-residue protein sequence, read N- to C-terminus: Beta-ketoacyl-[acyl-carrier-protein] synthase III (325 aa).

Active-site residues include cysteine 119 and histidine 252. Residues 253 to 257 form an ACP-binding region; that stretch reads QANIR. Residue asparagine 282 is part of the active site.

This sequence belongs to the thiolase-like superfamily. FabH family. As to quaternary structure, homodimer.

It localises to the cytoplasm. It catalyses the reaction malonyl-[ACP] + acetyl-CoA + H(+) = 3-oxobutanoyl-[ACP] + CO2 + CoA. The protein operates within lipid metabolism; fatty acid biosynthesis. Functionally, catalyzes the condensation reaction of fatty acid synthesis by the addition to an acyl acceptor of two carbons from malonyl-ACP. Catalyzes the first condensation reaction which initiates fatty acid synthesis and may therefore play a role in governing the total rate of fatty acid production. Possesses both acetoacetyl-ACP synthase and acetyl transacylase activities. Its substrate specificity determines the biosynthesis of branched-chain and/or straight-chain of fatty acids. This chain is Beta-ketoacyl-[acyl-carrier-protein] synthase III, found in Polaromonas sp. (strain JS666 / ATCC BAA-500).